The chain runs to 55 residues: Transcriptional regulator CdrS (55 aa).

This sequence belongs to the CdrS family.

Its subcellular location is the cytoplasm. Transcriptional regulator which plays a central role in the regulation of cell division. Activates the expression of the gene encoding the cell division protein FtsZ2, and of other genes encoding proteins predicted to function in critical aspects of cell division. Required for normal cell division but not for cell elongation. May act during the transition from stasis to growth. The CdrSL-FtsZ2 transcriptional network might coordinate cell division timing with cell growth. The polypeptide is Transcriptional regulator CdrS (Halobacterium salinarum (strain ATCC 700922 / JCM 11081 / NRC-1) (Halobacterium halobium)).